An 833-amino-acid chain; its full sequence is MTDSVIRIKRYHYIHILDNNTNVTRTISGPVVYTRKEHETCLFDPCPCVSVPPRHYCVVKNPCVRGEAGEVVLESSGQVKLRLGDSEIRFEGEPFPLYPGEELDCRDGKGVQKLQLIPPNTGLHVRCVRDFKDADRRVGAGTEWMVAGPQTYIPRVEVVVVEEVKATVIYPNTALLVQANVNFTDRCGVPRVAGEKWLVRALGAYLKSVEETVLGLIQGTMLSDLKALRLSAVRSFTDVYGKARRAGEQWQVTLKDAPVHIVDAYETKVADVAAVSLSAKEYVIIHHPVDDTGHNRFGETLVRRGECTFFLQPGETMPRGVEQVLVVGKEEALLLEAVCEYRDGGEKRQPGSRWMVHGPLEYIPANEVKLLEHRRMMALDKNEGIYIMNTTTGEVRAVIGKPYMLDVNEVLWEKHLPLAVEELLESPNGSIQTSERNPGFVSHREKYRIVRFNVQHNAAVQIYDYRKKQPRIVLGPNLVMLAPHEEFTVLSLSGGTPKVPNSLQSLQLFLGPRFSSDTIVVETSDHARLRLRLSYNWYFDIDRANPSRRTFSVPDFIGDCCKTIASRVRGAVAAEDFDSFHRNSAKIIRTAVFGVDEAGETKKNLRFTANDFVVTNIDVQSSEPTDEKTRDSLQKSVQLAIEITTKSQEAAARHGNELKDQEAKGQLERQKLLDKIEVENARTKWLELQAKSEAVQASGQSVAEAKARAEALFIEVRSEMQQAEMRAKAYRISAEAELQKLQQRQALELEYTQRQNEIDVSKARAAAEAEAEKVKRMVDCIGRDTLVAIARAGPETQVKLLSSLGLKGYLITDGNSPVNLFGTAQGMIGEPKK.

MVP repeat units follow at residues 54–118 (RHYC…QLIP), 119–170 (PNTG…TVIY), 171–223 (PNTA…TMLS), 224–278 (DLKA…VSLS), 280–328 (KEYV…LVVG), 329–380 (KEEA…MALD), and 381–433 (KNEG…SIQT).

As to quaternary structure, the vault ribonucleoprotein particle is a huge (400 A x 670 A) cage structure of 12.9 MDa. It consists of a dimer of half-vaults, with each half-vault comprising 39 identical major vault protein (MVP) chains, PARP4 and one or more vault RNAs (vRNAs).

The protein resides in the cytoplasm. The protein localises to the nucleus. In terms of biological role, required for normal vault structure. Vaults are multi-subunit structures that may act as scaffolds for proteins involved in signal transduction. Vaults may also play a role in nucleo-cytoplasmic transport. The protein is Major vault protein of Leishmania infantum.